The chain runs to 351 residues: Heat-inducible transcription repressor HrcA (351 aa).

It belongs to the HrcA family.

In terms of biological role, negative regulator of class I heat shock genes (grpE-dnaK-dnaJ and groELS operons). Prevents heat-shock induction of these operons. This Fusobacterium nucleatum subsp. nucleatum (strain ATCC 25586 / DSM 15643 / BCRC 10681 / CIP 101130 / JCM 8532 / KCTC 2640 / LMG 13131 / VPI 4355) protein is Heat-inducible transcription repressor HrcA.